The chain runs to 199 residues: Recombination protein RecR (199 aa).

Residues 57–72 (CRQCRVLTEEPVCGLC) form a C4-type zinc finger. The region spanning 80-175 (SLLCVVEGPA…RTTRIAHGVP (96 aa)) is the Toprim domain.

The protein belongs to the RecR family.

In terms of biological role, may play a role in DNA repair. It seems to be involved in an RecBC-independent recombinational process of DNA repair. It may act with RecF and RecO. The sequence is that of Recombination protein RecR from Alkalilimnicola ehrlichii (strain ATCC BAA-1101 / DSM 17681 / MLHE-1).